The chain runs to 80 residues: Conotoxin SmIVA (80 aa).

The signal sequence occupies residues 1–21 (MGMRMMFTVFLLVVLATTVVS). Residues 22–38 (IPSDRASDGRNAAVNER) constitute a propeptide that is removed on maturation. Glutamine 39 carries the pyrrolidone carboxylic acid modification. The O-linked (HexNAc...) serine glycan is linked to serine 45. 4-hydroxyproline occurs at positions 55, 60, 70, and 72. A Serine amide modification is found at serine 75. Positions 76–80 (GRRND) are excised as a propeptide.

This sequence belongs to the conotoxin A superfamily. Contains 3 disulfide bonds. In terms of tissue distribution, expressed by the venom duct.

It localises to the secreted. Neurotoxin with probable activity on sodium channel. Induces intense repetitive firing of the frog neuromuscular junction, leading to a tetanic contracture in muscle fiber (spastic paralysis). In vivo, shows the same effect as the whole venom when injected on fish prey. The sequence is that of Conotoxin SmIVA from Conus stercusmuscarum (Fly-specked cone).